Consider the following 425-residue polypeptide: Type II secretion system protein L (425 aa).

Residues 1 to 273 (MKIAGKWKRK…DKAWQNTLLP (273 aa)) are Cytoplasmic-facing. A helical transmembrane segment spans residues 274-290 (WRGVGIAFACYLLLVVA). Residues 291 to 425 (DAGWAHYQLY…EGRLTLRSQQ (135 aa)) are Periplasmic-facing.

The protein belongs to the GSP L family. As to quaternary structure, type II secretion system is composed of four main components: the outer membrane complex, the inner membrane complex, the cytoplasmic secretion ATPase and the periplasm-spanning pseudopilus. Forms homodimers. Interacts with OutM/GspM. Interacts with OutE/GspE and OutF/GspF.

It localises to the cell inner membrane. In terms of biological role, inner membrane component of the type II secretion system required for the energy-dependent secretion of extracellular factors such as proteases and toxins from the periplasm. Plays a role in the complex assembly and recruits OutM resulting in a stable complex in the inner membrane. Provides thus a link between the energy-providing OutE protein in the cytoplasm and the rest of the T2SS machinery. This is Type II secretion system protein L (outL) from Pectobacterium carotovorum subsp. carotovorum (Erwinia carotovora subsp. carotovora).